A 197-amino-acid chain; its full sequence is uncharacterized protein (197 aa).

This is an uncharacterized protein from Methanothermobacter thermautotrophicus (Methanobacterium thermoformicicum).